We begin with the raw amino-acid sequence, 338 residues long: High mobility group B protein 9 (338 aa).

The 92-residue stretch at 38 to 129 (VKDSSVFWDT…LLFHYEQVHL (92 aa)) folds into the ARID domain. Positions 233–259 (TGRRRRRLGKRRRSRRREDPNYPKPNR) are disordered. Residues 235–247 (RRRRRLGKRRRSR) show a composition bias toward basic residues. Residues 255–322 (PKPNRSGYNF…RYQRELNEYR (68 aa)) constitute a DNA-binding region (HMG box).

Predominantly expressed in leaves, flowers and seedlings.

Its subcellular location is the nucleus. In terms of biological role, binds preferentially DNA with A/T-rich content. Required for karyogamy during female gametophyte development, when the two polar nuclei fuse to form the diploid central cell nucleus. This Arabidopsis thaliana (Mouse-ear cress) protein is High mobility group B protein 9 (HMGB9).